A 445-amino-acid chain; its full sequence is UPF0210 protein SP_0239 (445 aa).

It belongs to the UPF0210 family. As to quaternary structure, homodimer.

The sequence is that of UPF0210 protein SP_0239 from Streptococcus pneumoniae serotype 4 (strain ATCC BAA-334 / TIGR4).